Consider the following 525-residue polypeptide: Calcium uptake protein 1 homolog, mitochondrial (525 aa).

Residues 109–146 (ADAGQRPSSAADVNGEDKSSESESEDSEDEEAGSDLHL) form a disordered region. Residues 130-141 (SESEDSEDEEAG) are compositionally biased toward acidic residues. 2 consecutive EF-hand domains span residues 268-303 (ISRR…VRQQ) and 459-494 (LSDH…RVQR). Ca(2+) is bound by residues Asp-281, Asn-283, Asp-285, Asp-287, Glu-292, Asp-472, Asn-474, Asp-476, Gln-478, and Glu-483.

This sequence belongs to the MICU1 family. MICU1 subfamily.

It is found in the mitochondrion intermembrane space. The protein localises to the mitochondrion inner membrane. In terms of biological role, calcium sensor of the mitochondrial calcium uniporter (MCU) channel, which senses calcium level via its EF-hand domains. At low calcium levels, MICU1 occludes the pore of the MCU channel, preventing mitochondrial calcium uptake. At higher calcium levels, calcium-binding to MICU1 induces a conformational change that weakens MCU-MICU1 interactions and moves MICU1 away from the pore, allowing calcium permeation through the MCU channel. Also required to protect against manganese toxicity by preventing manganese uptake by MCU. During development, required in alpha/beta or gamma mushroom body neurons to support olfactory intermediate-term memory in the adult. The sequence is that of Calcium uptake protein 1 homolog, mitochondrial from Drosophila melanogaster (Fruit fly).